The sequence spans 330 residues: Beta-ketoacyl-[acyl-carrier-protein] synthase III (330 aa).

Catalysis depends on residues Cys114 and His255. The segment at 256 to 260 (QANQR) is ACP-binding. Asn285 is a catalytic residue.

The protein belongs to the thiolase-like superfamily. FabH family. Homodimer.

Its subcellular location is the cytoplasm. The catalysed reaction is malonyl-[ACP] + acetyl-CoA + H(+) = 3-oxobutanoyl-[ACP] + CO2 + CoA. Its pathway is lipid metabolism; fatty acid biosynthesis. Catalyzes the condensation reaction of fatty acid synthesis by the addition to an acyl acceptor of two carbons from malonyl-ACP. Catalyzes the first condensation reaction which initiates fatty acid synthesis and may therefore play a role in governing the total rate of fatty acid production. Possesses both acetoacetyl-ACP synthase and acetyl transacylase activities. Its substrate specificity determines the biosynthesis of branched-chain and/or straight-chain of fatty acids. The chain is Beta-ketoacyl-[acyl-carrier-protein] synthase III from Nostoc sp. (strain PCC 7120 / SAG 25.82 / UTEX 2576).